The primary structure comprises 837 residues: Tuftelin-interacting protein 11 (837 aa).

Residues 1-13 are compositionally biased toward basic and acidic residues; sequence MSLSHLYRDGEGH. Disordered stretches follow at residues 1 to 31, 54 to 73, and 85 to 136; these read MSLS…DWDL, WAER…RARD, and LKKG…AGGT. The interval 1 to 50 is required for interaction with DHX15; that stretch reads MSLSHLYRDGEGHMDDDEDERENFEITDWDLQNEFNPNRQRHWQTKEEAT. Position 2 is a phosphoserine (Ser2). Over residues 14–28 the composition is skewed to acidic residues; sequence MDDDEDERENFEITD. Over residues 54–64 the composition is skewed to basic and acidic residues; that stretch reads WAERDSDEERP. 2 positions are modified to phosphoserine: Ser59 and Ser98. The segment covering 91–102 has biased composition (acidic residues); the sequence is EEAELEDSDDEE. Basic and acidic residues predominate over residues 103 to 116; the sequence is KPVKQDEFPKDFGP. At Ser144 the chain carries Phosphoserine. One can recognise a G-patch domain in the interval 149-195; it reads TKGIGQKLLQKMGYVPGRGLGKNAQGIINPIEAKQRKGKGAVGAYGS. Disordered regions lie at residues 183-236 and 287-313; these read QRKG…KKKP and HKHS…ARAP. A Phosphoserine modification is found at Ser210. The span at 217–231 shows a compositional bias: basic and acidic residues; sequence EFQKELSQWRKDPSG. Residues 700 to 705 carry the Nuclear localization signal motif; sequence VKDKFN. Residues 710–734 are required for nuclear speckle localization; sequence IMNRAVSSNVGAYMQPGAREHIAYL.

Belongs to the TFP11/STIP family. Identified in the spliceosome C complex. Found in the Intron Large (IL) complex, a post-mRNA release spliceosomal complex containing the excised intron, U2, U5 and U6 snRNPs, and splicing factors. Interacts with TUFT1. Interacts with DHX15; indicative for a recruitment of DHX15 to the IL complex. Interacts with GCFC2.

The protein localises to the cytoplasm. It localises to the nucleus. Its function is as follows. Involved in pre-mRNA splicing, specifically in spliceosome disassembly during late-stage splicing events. Intron turnover seems to proceed through reactions in two lariat-intron associated complexes termed Intron Large (IL) and Intron Small (IS). In cooperation with DHX15 seems to mediate the transition of the U2, U5 and U6 snRNP-containing IL complex to the snRNP-free IS complex leading to efficient debranching and turnover of excised introns. May play a role in the differentiation of ameloblasts and odontoblasts or in the forming of the enamel extracellular matrix. The sequence is that of Tuftelin-interacting protein 11 (TFIP11) from Bos taurus (Bovine).